Reading from the N-terminus, the 139-residue chain is D-ribose pyranase (139 aa).

The active-site Proton donor is the H20. Residues D28, H106, and 128–130 (YAN) each bind substrate.

It belongs to the RbsD / FucU family. RbsD subfamily. In terms of assembly, homodecamer.

Its subcellular location is the cytoplasm. It carries out the reaction beta-D-ribopyranose = beta-D-ribofuranose. It functions in the pathway carbohydrate metabolism; D-ribose degradation; D-ribose 5-phosphate from beta-D-ribopyranose: step 1/2. Its function is as follows. Catalyzes the interconversion of beta-pyran and beta-furan forms of D-ribose. The sequence is that of D-ribose pyranase from Escherichia coli O127:H6 (strain E2348/69 / EPEC).